The following is a 212-amino-acid chain: Transmembrane emp24 domain-containing protein p24delta4 (212 aa).

Residues 1-25 form the signal peptide; that stretch reads MKKKMIPTTILLSALIFSLSPICEA. The Lumenal segment spans residues 26 to 179; that stretch reads VWLTVPHTGS…RIVSEKTNSR (154 aa). The 113-residue stretch at 35–147 folds into the GOLD domain; the sequence is SKCVSEEIQS…IEGVELEFKK (113 aa). Asn82 is a glycosylation site (N-linked (GlcNAc...) asparagine). Residues 133 to 155 adopt a coiled-coil conformation; sequence ARKEKIEGVELEFKKLEGAVEAI. An omega-N-methylated arginine mark is found at Arg165 and Arg170. Residues 180-200 traverse the membrane as a helical segment; that stretch reads VAWYSIMSLGICIVVSGLQIL. At 201–212 the chain is on the cytoplasmic side; sequence YLKQYFEKKKLI. A COPII vesicle coat-binding motif is present at residues 205-206; that stretch reads YF. The short motif at 205-212 is the COPI vesicle coat-binding element; sequence YFEKKKLI.

It belongs to the EMP24/GP25L family. In terms of assembly, probably oligomerizes with other members of the EMP24/GP25L family. Associates with the COPI vesicle coat (coatomer). Associates with the COPII vesicle coat (coatomer).

The protein resides in the endoplasmic reticulum membrane. Its subcellular location is the golgi apparatus membrane. In terms of biological role, involved in vesicular protein trafficking. Mainly functions in the early secretory pathway. Required for trafficking GLL23, a component of the PYK10 complex. May act as a receptor facilitating its packing into COPII carriers and export from the endoplasmic reticulum. This chain is Transmembrane emp24 domain-containing protein p24delta4 (CYB), found in Arabidopsis thaliana (Mouse-ear cress).